A 118-amino-acid chain; its full sequence is Large ribosomal subunit protein bL20 (118 aa).

This sequence belongs to the bacterial ribosomal protein bL20 family.

Its function is as follows. Binds directly to 23S ribosomal RNA and is necessary for the in vitro assembly process of the 50S ribosomal subunit. It is not involved in the protein synthesizing functions of that subunit. The sequence is that of Large ribosomal subunit protein bL20 from Hahella chejuensis (strain KCTC 2396).